The primary structure comprises 246 residues: Pyridoxine 5'-phosphate synthase (246 aa).

3-amino-2-oxopropyl phosphate contacts are provided by N8 and R19. H44 acts as the Proton acceptor in catalysis. The 1-deoxy-D-xylulose 5-phosphate site is built by R46 and H51. The active-site Proton acceptor is E76. 1-deoxy-D-xylulose 5-phosphate is bound at residue T106. H198 functions as the Proton donor in the catalytic mechanism. 3-amino-2-oxopropyl phosphate is bound by residues D199 and 221 to 222 (GH).

This sequence belongs to the PNP synthase family. As to quaternary structure, homooctamer; tetramer of dimers.

Its subcellular location is the cytoplasm. The catalysed reaction is 3-amino-2-oxopropyl phosphate + 1-deoxy-D-xylulose 5-phosphate = pyridoxine 5'-phosphate + phosphate + 2 H2O + H(+). It functions in the pathway cofactor biosynthesis; pyridoxine 5'-phosphate biosynthesis; pyridoxine 5'-phosphate from D-erythrose 4-phosphate: step 5/5. Its function is as follows. Catalyzes the complicated ring closure reaction between the two acyclic compounds 1-deoxy-D-xylulose-5-phosphate (DXP) and 3-amino-2-oxopropyl phosphate (1-amino-acetone-3-phosphate or AAP) to form pyridoxine 5'-phosphate (PNP) and inorganic phosphate. This chain is Pyridoxine 5'-phosphate synthase, found in Mesorhizobium japonicum (strain LMG 29417 / CECT 9101 / MAFF 303099) (Mesorhizobium loti (strain MAFF 303099)).